The sequence spans 109 residues: uncharacterized protein (109 aa).

This is an uncharacterized protein from Caenorhabditis elegans.